The following is a 180-amino-acid chain: Putative manganese efflux pump MntP (180 aa).

The next 6 membrane-spanning stretches (helical) occupy residues 6-26 (LFALAVALGTDAFSLCIGIGI), 34-54 (IALISLTVLIFHILMPLLGWY), 67-87 (ASIAGALLLLYLGGKMIWDTI), 103-123 (GGLLLLSASVSMDALSVGFTL), 130-150 (LVLAAGVIGLVAGMMTFAGLT), and 159-179 (IGERAELVGGIILVGIGVKLF).

It belongs to the MntP (TC 9.B.29) family.

The protein localises to the cell membrane. Probably functions as a manganese efflux pump. The protein is Putative manganese efflux pump MntP of Desulforamulus reducens (strain ATCC BAA-1160 / DSM 100696 / MI-1) (Desulfotomaculum reducens).